The following is a 400-amino-acid chain: GTPase Obg (400 aa).

In terms of domain architecture, Obg spans 1 to 159 (MKFVDEVQIR…RTLKLELLLL (159 aa)). In terms of domain architecture, OBG-type G spans 160–333 (ADVGMLGLPN…VCYDILDLLD (174 aa)). Residues 166–173 (GLPNAGKS), 191–195 (FTTLV), 213–216 (DIPG), 283–286 (NKMD), and 314–316 (TAI) contribute to the GTP site. 2 residues coordinate Mg(2+): Ser-173 and Thr-193.

This sequence belongs to the TRAFAC class OBG-HflX-like GTPase superfamily. OBG GTPase family. As to quaternary structure, monomer. It depends on Mg(2+) as a cofactor.

The protein localises to the cytoplasm. An essential GTPase which binds GTP, GDP and possibly (p)ppGpp with moderate affinity, with high nucleotide exchange rates and a fairly low GTP hydrolysis rate. Plays a role in control of the cell cycle, stress response, ribosome biogenesis and in those bacteria that undergo differentiation, in morphogenesis control. This chain is GTPase Obg, found in Aeromonas hydrophila subsp. hydrophila (strain ATCC 7966 / DSM 30187 / BCRC 13018 / CCUG 14551 / JCM 1027 / KCTC 2358 / NCIMB 9240 / NCTC 8049).